Consider the following 57-residue polypeptide: Large ribosomal subunit protein bL32 (57 aa).

The segment at 1 to 20 (MAVQQRRVSKSRKGMRRSHD) is disordered. Positions 7 to 19 (RVSKSRKGMRRSH) are enriched in basic residues.

It belongs to the bacterial ribosomal protein bL32 family.

This chain is Large ribosomal subunit protein bL32, found in Ureaplasma urealyticum serovar 10 (strain ATCC 33699 / Western).